A 218-amino-acid chain; its full sequence is MSTEPAPLLALDLTGTFAFGLNGALTAVRAARLDVVGVVVLGMITALGGGVIRDVLIDSLPPAAFLDWRYYTLAAAGGLLAFAVSRHLRRLEPAITVLDAVGLSTFAVIGASKALDAGLAVVPAMLLGVITAVGGGTIRDTLVGRIPTVLRTGLYAIPALAGAAVTVATTETGVYGLPAALGAAAVCFLIRMLGLHFGINAPEPPETRPSGGGTRRQK.

Helical transmembrane passes span 8 to 28, 37 to 57, 64 to 84, 91 to 111, 118 to 138, 154 to 174, and 179 to 199; these read LLALDLTGTFAFGLNGALTAV, GVVVLGMITALGGGVIRDVLI, AFLDWRYYTLAAAGGLLAFAV, LEPAITVLDAVGLSTFAVIGA, GLAVVPAMLLGVITAVGGGTI, LYAIPALAGAAVTVATTETGV, and AALGAAAVCFLIRMLGLHFGI.

It belongs to the UPF0126 family.

It is found in the cell membrane. This chain is UPF0126 membrane protein SCO4104, found in Streptomyces coelicolor (strain ATCC BAA-471 / A3(2) / M145).